A 304-amino-acid polypeptide reads, in one-letter code: Olfactory receptor 4K13 (304 aa).

The Extracellular segment spans residues 1–25 (MERANHSVVSEFILLGLSKSQNLQI). Residue Asn-5 is glycosylated (N-linked (GlcNAc...) asparagine). The helical transmembrane segment at 26 to 49 (LFFLGFSVVFVGIVLGNLLILVTV) threads the bilayer. Over 50–57 (TFDSLLHT) the chain is Cytoplasmic. A helical membrane pass occupies residues 58 to 79 (PMYFLLSNLSCIDMILASFATP). Topologically, residues 80–100 (KMIVDFLRERKTISWWGCYSQ) are extracellular. A disulfide bridge links Cys-97 with Cys-189. The chain crosses the membrane as a helical span at residues 101-120 (MFFMHLLGGSEMMLLVAMAI). Topologically, residues 121–139 (DRYVAICKPLHYMTIMSPR) are cytoplasmic. The chain crosses the membrane as a helical span at residues 140 to 158 (VLTGLLLSSYAVGFVHSSS). At 159-195 (QMAFMLTLPFCGPNVIDSFFCDLPLVIKLACKDTYIL) the chain is on the extracellular side. The chain crosses the membrane as a helical span at residues 196-219 (QLLVIADSGLLSLVCFLLLLVSYG). The Cytoplasmic segment spans residues 220-235 (VIIFSVRYRAASRSSK). Residues 236–258 (AFSTLSAHITVVTLFFAPCVFIY) form a helical membrane-spanning segment. The Extracellular segment spans residues 259-269 (VWPFSRYSVDK). The chain crosses the membrane as a helical span at residues 270–289 (ILSVFYTIFTPLLNPIIYTL). Residues 290–304 (RNQEVKAAIKKRLCI) lie on the Cytoplasmic side of the membrane.

Belongs to the G-protein coupled receptor 1 family.

Its subcellular location is the cell membrane. Odorant receptor. The polypeptide is Olfactory receptor 4K13 (OR4K13) (Homo sapiens (Human)).